The sequence spans 295 residues: 4-hydroxybenzoate octaprenyltransferase (295 aa).

A run of 8 helical transmembrane segments spans residues 28 to 48 (PIGIYLLLWPTLWAVWIAADG), 55 to 75 (VLIFTCGVILMRSAGCVINDF), 103 to 123 (WALFAVLVALSFGLVLLTDPF), 147 to 167 (LPQLVLGAAYSWGIPMAFTAA), 175 to 195 (AWLIFAANLAWTVAYDTYYAM), 219 to 239 (AIILALQGLTLGLLLVVGMRL), 241 to 261 (LGPYFHLGLLVAALCFAWEFV), and 275 to 295 (FLHNHWAGLAILVGLILDYGI).

Belongs to the UbiA prenyltransferase family. Requires Mg(2+) as cofactor.

The protein localises to the cell inner membrane. The enzyme catalyses all-trans-octaprenyl diphosphate + 4-hydroxybenzoate = 4-hydroxy-3-(all-trans-octaprenyl)benzoate + diphosphate. Its pathway is cofactor biosynthesis; ubiquinone biosynthesis. Functionally, catalyzes the prenylation of para-hydroxybenzoate (PHB) with an all-trans polyprenyl group. Mediates the second step in the final reaction sequence of ubiquinone-8 (UQ-8) biosynthesis, which is the condensation of the polyisoprenoid side chain with PHB, generating the first membrane-bound Q intermediate 3-octaprenyl-4-hydroxybenzoate. The polypeptide is 4-hydroxybenzoate octaprenyltransferase (Azotobacter vinelandii (strain DJ / ATCC BAA-1303)).